The chain runs to 186 residues: ADP-ribosylation factor-like protein 8A (186 aa).

An intramembrane region (note=Mediates targeting to membranes) is located at residues 1 to 19 (MIALFNKLLDWFKALFWKE). GTP-binding positions include 29–35 (QYSGKTT), 71–75 (DIGGQ), and 130–133 (NKRD).

It belongs to the small GTPase superfamily. Arf family. Interacts with PLEKHM1. When GTP-bound, interacts with RUFY3 and RUFY4, but not with RUFY1, nor RUFY2.

It localises to the late endosome membrane. It is found in the lysosome membrane. The protein resides in the cytoplasm. The protein localises to the cytoskeleton. Its subcellular location is the spindle. It localises to the cell projection. It is found in the axon. The protein resides in the synapse. Plays a role in lysosomes motility. In neurons, mediates the anterograde axonal long-range transport of presynaptic lysosome-related vesicles required for presynaptic biogenesis and synaptic function. May play a role in chromosome segregation. The protein is ADP-ribosylation factor-like protein 8A (Arl8a) of Mus musculus (Mouse).